Consider the following 311-residue polypeptide: Iron-binding protein YfeA (311 aa).

The first 31 residues, 1–31 (MIERLNSPFLRAAALFTIVAFSSLISTAALA), serve as a signal peptide directing secretion. Fe(2+) is bound by residues histidine 76, histidine 141, glutamate 207, and aspartate 282.

The protein belongs to the bacterial solute-binding protein 9 family. In terms of assembly, monomer.

The protein resides in the periplasm. Its function is as follows. Part of the ATP-binding cassette (ABC) transport system YfeABC involved in iron import. Binds iron with high affinity and specificity and delivers it to the membrane permease for translocation into the cytoplasm. Also binds Mn(2+) and Zn(2+). In Yersinia pestis, this protein is Iron-binding protein YfeA (yfeA).